Here is a 274-residue protein sequence, read N- to C-terminus: uncharacterized protein (274 aa).

Residues 253–274 (QTGDVRTTEGTALTDDTTKRNI) form a disordered region.

This is an uncharacterized protein from Deinococcus radiodurans (strain ATCC 13939 / DSM 20539 / JCM 16871 / CCUG 27074 / LMG 4051 / NBRC 15346 / NCIMB 9279 / VKM B-1422 / R1).